The primary structure comprises 85 residues: U4-theraphotoxin-Hhn1f (85 aa).

The N-terminal stretch at 1–22 (MKVTLIAILTCAAVLVLHTTAA) is a signal peptide. Residues 23 to 48 (EELEAESQLMEVGMPDTELAAVDEER) constitute a propeptide that is removed on maturation. The cysteines at positions 71 and 82 are disulfide-linked.

The protein belongs to the neurotoxin 12 (Hwtx-2) family. 02 (Hwtx-2) subfamily. In terms of tissue distribution, expressed by the venom gland.

It is found in the secreted. Its function is as follows. Postsynaptic neurotoxin. The polypeptide is U4-theraphotoxin-Hhn1f (Cyriopagopus hainanus (Chinese bird spider)).